We begin with the raw amino-acid sequence, 673 residues long: Paralemmin-3 (673 aa).

Coiled coils occupy residues 4–49 and 75–101; these read SSLY…LRER and GQAQ…LQSA. Disordered stretches follow at residues 49–78 and 99–213; these read RWLM…GQAQ and QSAS…GEAK. Over residues 123–137 the composition is skewed to polar residues; that stretch reads LSQSIVEAGSVGQTD. Phosphoserine is present on residues serine 124 and serine 143. At threonine 151 the chain carries Phosphothreonine. Phosphoserine occurs at positions 155, 157, and 260. Disordered stretches follow at residues 295–343 and 356–673; these read VPEV…SFIW and LLVE…CAVM. Threonine 301 is modified (phosphothreonine). Serine 325 carries the phosphoserine modification. Positions 327 to 338 are enriched in gly residues; that stretch reads EGDGQGGSGGEE. Phosphoserine occurs at positions 375 and 420. Composition is skewed to basic and acidic residues over residues 392-477 and 487-532; these read EAEK…KRGA and GVEK…EKTQ. Residues serine 544 and serine 660 each carry the phosphoserine modification. S-palmitoyl cysteine attachment occurs at residues cysteine 667 and cysteine 669. Residue cysteine 670 is modified to Cysteine methyl ester. Residue cysteine 670 is the site of S-farnesyl cysteine attachment. Residues 671–673 constitute a propeptide, removed in mature form; the sequence is AVM.

The protein belongs to the paralemmin family. In terms of assembly, interacts with SIGIRR. Post-translationally, palmitoylated on Cys-667 and Cys-669 and prenylated on Cys-670; which is required for membrane association.

It localises to the cytoplasm. Its subcellular location is the cell membrane. Functionally, ATP-binding protein, which may act as a adapter in the Toll-like receptor (TLR) signaling. The chain is Paralemmin-3 (PALM3) from Homo sapiens (Human).